Here is a 401-residue protein sequence, read N- to C-terminus: MQKPPRTAAIIVAAGRGLRAGAGGPKQYRTLAGRPVIARALQPFCTHPEVFAVQPVTNPDDTATFNEAVAGLDFRPAVGGGATRQASVRAGLEALAELNPDIVLIHDAARPFVTPDLISRAIVAAGQTGAALPVIAVNDTVKQVDAEGCVVATPDRAQLRIAQTPQAFRFDVILDAHRRAARDGRDDFTDDAAIAEWAGLTVSTFEGDAANMKLTTPEDFSREESRLTAALGDIRTGTGYDVHAFGDGDHVWLCGLKVPHNRGFLAHSDGDVGLHALVDAILGALADGDIGSHFPPTDPQWKGAASDKFLKYAVDRVAARGGRIANLEVTMICERPKIGPLRDPMRQRIAEITGVPVSRVAVKATTSERLGFTGREEGIAATASATIRLPWSPWGAEGQAS.

The segment at M1–I234 is 2-C-methyl-D-erythritol 4-phosphate cytidylyltransferase. The tract at residues R235–S401 is 2-C-methyl-D-erythritol 2,4-cyclodiphosphate synthase. Residues D241 and H243 each coordinate a divalent metal cation. 4-CDP-2-C-methyl-D-erythritol 2-phosphate is bound by residues D241–H243 and H267–S268. Residue H275 participates in a divalent metal cation binding. Residues D289–G291, T365–E368, F372, and R375 contribute to the 4-CDP-2-C-methyl-D-erythritol 2-phosphate site.

The protein in the N-terminal section; belongs to the IspD/TarI cytidylyltransferase family. IspD subfamily. This sequence in the C-terminal section; belongs to the IspF family. A divalent metal cation serves as cofactor.

The catalysed reaction is 2-C-methyl-D-erythritol 4-phosphate + CTP + H(+) = 4-CDP-2-C-methyl-D-erythritol + diphosphate. It catalyses the reaction 4-CDP-2-C-methyl-D-erythritol 2-phosphate = 2-C-methyl-D-erythritol 2,4-cyclic diphosphate + CMP. Its pathway is isoprenoid biosynthesis; isopentenyl diphosphate biosynthesis via DXP pathway; isopentenyl diphosphate from 1-deoxy-D-xylulose 5-phosphate: step 2/6. It functions in the pathway isoprenoid biosynthesis; isopentenyl diphosphate biosynthesis via DXP pathway; isopentenyl diphosphate from 1-deoxy-D-xylulose 5-phosphate: step 4/6. Bifunctional enzyme that catalyzes the formation of 4-diphosphocytidyl-2-C-methyl-D-erythritol from CTP and 2-C-methyl-D-erythritol 4-phosphate (MEP) (IspD), and catalyzes the conversion of 4-diphosphocytidyl-2-C-methyl-D-erythritol 2-phosphate (CDP-ME2P) to 2-C-methyl-D-erythritol 2,4-cyclodiphosphate (ME-CPP) with a corresponding release of cytidine 5-monophosphate (CMP) (IspF). This is Bifunctional enzyme IspD/IspF from Rhodopseudomonas palustris (strain HaA2).